Here is a 231-residue protein sequence, read N- to C-terminus: Large ribosomal subunit protein uL1 (231 aa).

The protein belongs to the universal ribosomal protein uL1 family. In terms of assembly, part of the 50S ribosomal subunit.

Functionally, binds directly to 23S rRNA. The L1 stalk is quite mobile in the ribosome, and is involved in E site tRNA release. In terms of biological role, protein L1 is also a translational repressor protein, it controls the translation of the L11 operon by binding to its mRNA. The polypeptide is Large ribosomal subunit protein uL1 (Methylocella silvestris (strain DSM 15510 / CIP 108128 / LMG 27833 / NCIMB 13906 / BL2)).